The chain runs to 164 residues: Lectin (164 aa).

The N-terminal stretch at 1 to 15 is a signal peptide; it reads TVATILTILASTCMA. In terms of domain architecture, Bulb-type lectin spans 16–125; that stretch reads RNVLVNNEGL…DIWSTGTYRK (110 aa). Cysteine 44 and cysteine 68 are disulfide-bonded.

In terms of assembly, homotetramer. Post-translationally, not glycosylated.

Functionally, mannose-specific lectin. Induces a Th1-type immune response in vitro. Causes a 4-fold increase in the proliferation of murine thymocytes and a significant increase in the production of nitric oxide at 24 hours in a macrophage cell line. Stimulates the production of the pro-inflammatory cytokines TNF and IL12 by rat peritoneal macrophages in a dose-dependent manner and of the cytokines IFNG and IL2 in murine thymocytes. Has hemagglutination activity towards rabbit erythrocytes. The protein is Lectin of Allium cepa (Onion).